We begin with the raw amino-acid sequence, 451 residues long: Putative metabolite transport protein YyaJ (451 aa).

Topologically, residues 1 to 29 (MNTIFKQKNTHPFSNAANRLDRLPISRVH) are cytoplasmic. A helical transmembrane segment spans residues 30 to 50 (FQVLTALGIVYFFDLADLFTL). Topologically, residues 51–60 (SNVAPALIEH) are extracellular. A helical transmembrane segment spans residues 61-81 (WGIPLSTIANVTAASFLGMFL). Topologically, residues 82-97 (GASLGGRLSDRIGRKK) are cytoplasmic. The helical transmembrane segment at 98 to 118 (ALNLFVFVFSIASLCNAAAWD) threads the bilayer. Residues 119–124 (IPSLMT) lie on the Extracellular side of the membrane. A helical membrane pass occupies residues 125–145 (FRFLTGFGVAAAMVITNSYLA). Topologically, residues 146–157 (EFFPSSVRGKYI) are cytoplasmic. Residues 158-178 (SFCAMIGLIGVPITNIVSAFV) form a helical membrane-spanning segment. Residues 179-182 (IPLG) are Extracellular-facing. Residues 183–203 (SWGWRLVFVWGAVGLIYFFFI) form a helical membrane-spanning segment. Residues 204 to 270 (HRLEESPRWH…LLKGRNLKIT (67 aa)) are Cytoplasmic-facing. The helical transmembrane segment at 271–291 (IVLSAVWIFETFGFYGFASWV) threads the bilayer. Topologically, residues 292–305 (PSLLKSNGVTMENT) are extracellular. Residues 306–326 (LWYNVLHSVGAPLGALLGSMI) traverse the membrane as a helical segment. Topologically, residues 327–333 (SERFQRK) are cytoplasmic. Residues 334-354 (WILAASAFLTAIAGLLYGMTF) form a helical membrane-spanning segment. The Extracellular portion of the chain corresponds to 355–357 (IPI). A helical membrane pass occupies residues 358–378 (MIIVFGFIVNITERVFTSNLY). The Cytoplasmic segment spans residues 379–396 (AYTSEPYPTEYRSSGSGL). The helical transmembrane segment at 397 to 417 (AYGLGRFSNIFGSLLVGFIAV) threads the bilayer. Topologically, residues 418–421 (QLGY) are extracellular. Residues 422-442 (ISVFLFIGGCWLACSLLLIFF) traverse the membrane as a helical segment. Over 443–451 (GPNTNAKQI) the chain is Cytoplasmic.

Belongs to the major facilitator superfamily. Sugar transporter (TC 2.A.1.1) family.

It localises to the cell membrane. This is Putative metabolite transport protein YyaJ (yyaJ) from Bacillus subtilis (strain 168).